A 215-amino-acid polypeptide reads, in one-letter code: Lysozyme-like protein 5 (215 aa).

A signal peptide spans 1–17; it reads MKHFFITILLFCSVVSA. Residues 18–215 form the Ch-type lysozyme domain; that stretch reads ARNGIDINSP…GVSVDMNYIP (198 aa). Residues aspartate 23, aspartate 113, and glutamate 115 contribute to the active site.

This sequence belongs to the glycosyl hydrolase 25 family.

Plays a role in resistance to Gram-positive bacteria S.aureus or B.thuringiensis infection. The sequence is that of Lysozyme-like protein 5 from Caenorhabditis elegans.